A 237-amino-acid chain; its full sequence is Ribonuclease 3 (237 aa).

The 130-residue stretch at 4–133 folds into the RNase III domain; the sequence is LTELENSLGV…VLAAIYIDKG (130 aa). Mg(2+) is bound at residue E46. Active-site residues include D50 and E122. Mg(2+) is bound at residue E122. In terms of domain architecture, DRBM spans 160–229; that stretch reads DYKSRLQELI…AKVALQQFEN (70 aa).

Belongs to the ribonuclease III family. In terms of assembly, homodimer. The cofactor is Mg(2+).

The protein localises to the cytoplasm. It catalyses the reaction Endonucleolytic cleavage to 5'-phosphomonoester.. Digests double-stranded RNA. Involved in the processing of primary rRNA transcript to yield the immediate precursors to the large and small rRNAs (23S and 16S). Processes some mRNAs, and tRNAs when they are encoded in the rRNA operon. Processes pre-crRNA and tracrRNA of type II CRISPR loci if present in the organism. The protein is Ribonuclease 3 of Dehalococcoides mccartyi (strain CBDB1).